A 114-amino-acid polypeptide reads, in one-letter code: MSQAEMSTCSTPHTQRVFQEAVRKGNTKELQSLLQNMTNCEFNVNSFGPEGQTALHQSVIDGNLELVKLLVKFGADIRLANRDGWSALHIAAYGGHQDIVLYLITKAKYSSSSR.

2 ANK repeats span residues 50–79 (EGQT…DIRL) and 83–112 (DGWS…YSSS).

Belongs to the NRARP family. As to quaternary structure, forms a ternary complex with the intracellular domain (ICD) of notch1 and rbpj/suh.

Functionally, promotes loss of intracellular domain (ICD) of Notch1 in embryos. By down-regulating ICD levels, could function as a negative feedback regulator of Notch signaling that attenuates ICD-mediated transcription. Involved in angiogenesis. May be involved in somitogenesis. The protein is Notch-regulated ankyrin repeat-containing protein (nrarp) of Xenopus tropicalis (Western clawed frog).